Reading from the N-terminus, the 271-residue chain is Urease accessory protein UreD (271 aa).

Belongs to the UreD family. In terms of assembly, ureD, UreF and UreG form a complex that acts as a GTP-hydrolysis-dependent molecular chaperone, activating the urease apoprotein by helping to assemble the nickel containing metallocenter of UreC. The UreE protein probably delivers the nickel.

Its subcellular location is the cytoplasm. Required for maturation of urease via the functional incorporation of the urease nickel metallocenter. The chain is Urease accessory protein UreD from Haemophilus influenzae (strain PittEE).